Reading from the N-terminus, the 275-residue chain is Reticulon-like protein B1 (275 aa).

Composition is skewed to basic and acidic residues over residues 1 to 10 and 20 to 38; these read MAEEHKHDES and VVER…HHGG. The disordered stretch occupies residues 1 to 68; the sequence is MAEEHKHDES…PSSPSSSMKS (68 aa). At Ala2 the chain carries N-acetylalanine. The span at 59–68 shows a compositional bias: low complexity; that stretch reads PSSPSSSMKS. Residues 89–274 enclose the Reticulon domain; sequence PADIFMWKNK…PLGPLKNKKK (186 aa). 3 helical membrane-spanning segments follow: residues 99 to 119, 120 to 140, and 194 to 214; these read KMSG…ELME, YHLL…LFLW, and FLIA…FNFL.

As to quaternary structure, interacts with VirB2. As to expression, predominantly expressed in root tissues.

The protein resides in the endoplasmic reticulum membrane. It is found in the cell membrane. Functionally, plays a role in the Agrobacterium-mediated plant transformation via its interaction with VirB2, the major component of the T-pilus. This Arabidopsis thaliana (Mouse-ear cress) protein is Reticulon-like protein B1 (RTNLB1).